Here is a 46-residue protein sequence, read N- to C-terminus: Large ribosomal subunit protein bL34c (46 aa).

It belongs to the bacterial ribosomal protein bL34 family.

Its subcellular location is the plastid. It localises to the chloroplast. The sequence is that of Large ribosomal subunit protein bL34c from Pyropia yezoensis (Susabi-nori).